Consider the following 246-residue polypeptide: UDP-N-acetyl-D-mannosaminuronic acid transferase (246 aa).

Belongs to the glycosyltransferase 26 family.

The catalysed reaction is UDP-N-acetyl-alpha-D-mannosaminouronate + N-acetyl-alpha-D-glucosaminyl-di-trans,octa-cis-undecaprenyl diphosphate = beta-D-ManNAcA-(1-&gt;4)-alpha-D-GlcNAc-di-trans,octa-cis-undecaprenyl diphosphate + UDP + H(+). The protein operates within bacterial outer membrane biogenesis; enterobacterial common antigen biosynthesis. Its function is as follows. Catalyzes the synthesis of Und-PP-GlcNAc-ManNAcA (Lipid II), the second lipid-linked intermediate involved in enterobacterial common antigen (ECA) synthesis. The protein is UDP-N-acetyl-D-mannosaminuronic acid transferase of Klebsiella pneumoniae (strain 342).